Reading from the N-terminus, the 208-residue chain is Ciliary-associated calcium-binding coiled-coil protein 1 (208 aa).

Testis-specific. Expressed in spermatocytes and round spermatids (at protein level).

It localises to the cytoplasm. It is found in the cytoskeleton. Its subcellular location is the microtubule organizing center. The protein resides in the centrosome. The protein localises to the cell projection. It localises to the cilium. It is found in the flagellum. Functionally, calcium-binding protein. May be involved in the control of sperm flagellar movement. This is Ciliary-associated calcium-binding coiled-coil protein 1 from Mus musculus (Mouse).